The following is a 567-amino-acid chain: Sporulation-specific protein 5 (567 aa).

Residues 1–18 show a composition bias toward polar residues; it reads MNGIITPQKQKQLMSSPS. Disordered stretches follow at residues 1-39 and 52-76; these read MNGIITPQKQKQLMSSPSRDPLSTTELSTPTSQTTVDVN and ILLTPGTSPNATPGSSELGLSKKPN. The span at 21–35 shows a compositional bias: low complexity; that stretch reads PLSTTELSTPTSQTT. Residues 56–66 show a composition bias toward polar residues; sequence PGTSPNATPGS. RRM domains follow at residues 296 to 380 and 384 to 462; these read RNVY…SLQD and TNLY…FADS.

Its subcellular location is the cytoplasm. Its function is as follows. RNA-binding protein which plays a role in sporulation. Regulates the progression of meiosis I and may function in the vicinity of the Mei2 dot. In Schizosaccharomyces pombe (strain 972 / ATCC 24843) (Fission yeast), this protein is Sporulation-specific protein 5 (spo5).